The primary structure comprises 460 residues: Elongation factor 1-alpha (460 aa).

A N,N,N-trimethylglycine modification is found at glycine 2. The residue at position 3 (lysine 3) is an N6,N6-dimethyllysine; alternate. Position 3 is an N6-methyllysine; alternate (lysine 3). The region spanning lysine 6 to threonine 241 is the tr-type G domain. The G1 stretch occupies residues glycine 15–serine 22. Glycine 15–serine 22 provides a ligand contact to GTP. The residue at position 31 (lysine 31) is an N6-methyllysine. Residues glycine 71–aspartate 75 form a G2 region. Residue lysine 80 is modified to N6,N6,N6-trimethyllysine. A G3 region spans residues aspartate 92–glycine 95. Residues aspartate 92–histidine 96 and asparagine 154–aspartate 157 each bind GTP. The tract at residues asparagine 154–aspartate 157 is G4. Positions serine 193–phenylalanine 195 are G5. Lysine 317 carries the N6,N6-dimethyllysine; alternate modification. Lysine 317 is modified (N6-methyllysine; alternate). Lysine 391 is subject to N6-methyllysine.

The protein belongs to the TRAFAC class translation factor GTPase superfamily. Classic translation factor GTPase family. EF-Tu/EF-1A subfamily.

The protein localises to the cytoplasm. Its function is as follows. This protein promotes the GTP-dependent binding of aminoacyl-tRNA to the A-site of ribosomes during protein biosynthesis. The chain is Elongation factor 1-alpha (tef1) from Aspergillus oryzae (strain ATCC 42149 / RIB 40) (Yellow koji mold).